We begin with the raw amino-acid sequence, 152 residues long: Large ribosomal subunit protein uL13 (152 aa).

Residues 133–152 form a disordered region; it reads EHPHQAQKPQPLTINTIPGA. The segment covering 139-152 has biased composition (polar residues); sequence QKPQPLTINTIPGA.

Belongs to the universal ribosomal protein uL13 family. As to quaternary structure, part of the 50S ribosomal subunit.

Its function is as follows. This protein is one of the early assembly proteins of the 50S ribosomal subunit, although it is not seen to bind rRNA by itself. It is important during the early stages of 50S assembly. The chain is Large ribosomal subunit protein uL13 from Thermosynechococcus vestitus (strain NIES-2133 / IAM M-273 / BP-1).